The sequence spans 270 residues: Undecaprenyl-diphosphatase 1 (270 aa).

The next 7 membrane-spanning stretches (helical) occupy residues 5–25 (YYIL…PIPI), 42–62 (IEGF…VLLI), 89–109 (FFFI…GVLF), 117–137 (LKGV…LWII), 192–212 (FSFL…ITDI), 220–240 (TLFV…YISL), and 250–270 (GNLK…LIFL).

The protein belongs to the UppP family.

The protein localises to the cell membrane. The enzyme catalyses di-trans,octa-cis-undecaprenyl diphosphate + H2O = di-trans,octa-cis-undecaprenyl phosphate + phosphate + H(+). Its function is as follows. Catalyzes the dephosphorylation of undecaprenyl diphosphate (UPP). Confers resistance to bacitracin. The protein is Undecaprenyl-diphosphatase 1 of Bacillus cereus (strain ATCC 10987 / NRS 248).